A 157-amino-acid polypeptide reads, in one-letter code: uncharacterized protein (157 aa).

The first 19 residues, 1 to 19 (MRKYLIILVLLLFLSSSFG), serve as a signal peptide directing secretion.

This is an uncharacterized protein from Methanocaldococcus jannaschii (strain ATCC 43067 / DSM 2661 / JAL-1 / JCM 10045 / NBRC 100440) (Methanococcus jannaschii).